The sequence spans 360 residues: Pyrimidine monooxygenase RutA (360 aa).

FMN is bound by residues 49 to 50 (IK), asparagine 115, glutamate 124, 140 to 141 (RY), and serine 190.

This sequence belongs to the NtaA/SnaA/DszA monooxygenase family. RutA subfamily.

The catalysed reaction is uracil + FMNH2 + NADH + O2 = (Z)-3-ureidoacrylate + FMN + NAD(+) + H2O + H(+). It catalyses the reaction thymine + FMNH2 + NADH + O2 = (Z)-2-methylureidoacrylate + FMN + NAD(+) + H2O + H(+). Functionally, catalyzes the pyrimidine ring opening between N-3 and C-4 by an unusual flavin hydroperoxide-catalyzed mechanism, adding oxygen atoms in the process to yield ureidoacrylate peracid, that immediately reacts with FMN forming ureidoacrylate and FMN-N(5)-oxide. The FMN-N(5)-oxide reacts spontaneously with NADH to produce FMN. Requires the flavin reductase RutF to regenerate FMN in vivo. The chain is Pyrimidine monooxygenase RutA from Pseudomonas savastanoi pv. phaseolicola (strain 1448A / Race 6) (Pseudomonas syringae pv. phaseolicola (strain 1448A / Race 6)).